Reading from the N-terminus, the 397-residue chain is Elongation factor Tu-1 (397 aa).

A tr-type G domain is found at 10-206; it reads KPHVNIGTIG…AVDESIPEPE (197 aa). The tract at residues 19-26 is G1; that stretch reads GHIDHGKT. 19–26 is a binding site for GTP; the sequence is GHIDHGKT. Mg(2+) is bound at residue T26. The tract at residues 62–66 is G2; that stretch reads GITIS. The G3 stretch occupies residues 83-86; sequence DCPG. Residues 83–87 and 138–141 contribute to the GTP site; these read DCPGH and NKAD. The tract at residues 138-141 is G4; it reads NKAD. The tract at residues 176–178 is G5; the sequence is SAL.

This sequence belongs to the TRAFAC class translation factor GTPase superfamily. Classic translation factor GTPase family. EF-Tu/EF-1A subfamily. As to quaternary structure, monomer.

The protein resides in the cytoplasm. The enzyme catalyses GTP + H2O = GDP + phosphate + H(+). In terms of biological role, GTP hydrolase that promotes the GTP-dependent binding of aminoacyl-tRNA to the A-site of ribosomes during protein biosynthesis. The sequence is that of Elongation factor Tu-1 from Streptomyces ramocissimus.